Reading from the N-terminus, the 122-residue chain is Large ribosomal subunit protein uL14 (122 aa).

The protein belongs to the universal ribosomal protein uL14 family. Part of the 50S ribosomal subunit. Forms a cluster with proteins L3 and L19. In the 70S ribosome, L14 and L19 interact and together make contacts with the 16S rRNA in bridges B5 and B8.

Its function is as follows. Binds to 23S rRNA. Forms part of two intersubunit bridges in the 70S ribosome. The chain is Large ribosomal subunit protein uL14 from Staphylococcus aureus (strain MW2).